The primary structure comprises 448 residues: Beta-alanine--pyruvate aminotransferase (448 aa).

Substrate is bound at residue W61. Residue 120–121 coordinates pyridoxal 5'-phosphate; it reads GS. K288 bears the N6-(pyridoxal phosphate)lysine mark. T327 is a binding site for pyridoxal 5'-phosphate. 2 residues coordinate substrate: R414 and Q421.

Belongs to the class-III pyridoxal-phosphate-dependent aminotransferase family. In terms of assembly, homotetramer. It depends on pyridoxal 5'-phosphate as a cofactor.

The catalysed reaction is 3-oxopropanoate + L-alanine = beta-alanine + pyruvate. With respect to regulation, inhibited by gabaculine (5-amino-1,3-cyclohexadienylcarboxylic acid). Its function is as follows. Involved in the degradation of beta-alanine. Catalyzes the transfer of the amino group from beta-alanine to pyruvate to yield L-alanine and 3-oxopropanoate. It can also accept both 4-aminobutyrate and (S)-alpha-methylbenzylamine (MBA) as amino-group donors in the presence of pyruvate as an amine acceptor. The protein is Beta-alanine--pyruvate aminotransferase (bauA) of Pseudomonas aeruginosa (strain ATCC 15692 / DSM 22644 / CIP 104116 / JCM 14847 / LMG 12228 / 1C / PRS 101 / PAO1).